The chain runs to 319 residues: Vesicle-associated membrane protein-associated protein scs22 (319 aa).

Positions 1 to 121 constitute an MSP domain; sequence MALECDSTIV…SERKIRCVYS (121 aa). Residues 1–298 lie on the Cytoplasmic side of the membrane; it reads MALECDSTIV…GAKVVPQIHN (298 aa). Low complexity predominate over residues 127–150; it reads ANAHANAHHQPAQTTTTSIPTSAT. Residues 127 to 244 are disordered; the sequence is ANAHANAHHQ…TTSPNNENNA (118 aa). 3 stretches are compositionally biased toward polar residues: residues 151-165, 185-201, and 231-244; these read DNYT…QSYS, STAT…SAVS, and SVPT…ENNA. Position 236 is a phosphothreonine (Thr-236). Phosphoserine occurs at positions 237 and 281. A helical; Anchor for type IV membrane protein transmembrane segment spans residues 299-319; the sequence is TVTVQTAFLLAIICFLIGLLF.

The protein belongs to the VAMP-associated protein (VAP) (TC 9.B.17) family. In terms of assembly, interacts with epr1.

The protein resides in the endoplasmic reticulum membrane. Functionally, vesicle-associated membrane protein-associated protein (VAP) implicated in maintaining the cortical endoplasmic reticulum (ER)-plasma membrane (PM) attachment. ER-PM contacts function to modulate the distribution of contractile ring components to ensure robust ring assembly. ER-PM contacts function also in controlling exocytosis and maintenance of cell polarity regulating cell shape. VAPs play an important role in regulating eisosome assembly. VAPs also contribute to ER-phagy by tethering atg8 to the ER membrane, but also by maintaining the ER-plasma membrane contact. This Schizosaccharomyces pombe (strain 972 / ATCC 24843) (Fission yeast) protein is Vesicle-associated membrane protein-associated protein scs22 (scs22).